We begin with the raw amino-acid sequence, 495 residues long: Steroid 21-hydroxylase (495 aa).

The heme b site is built by R92 and K121. R234 contributes to the 17alpha-hydroxyprogesterone binding site. R234 is a binding site for progesterone. Residues H366, R427, and C429 each contribute to the heme b site.

The protein belongs to the cytochrome P450 family. Heme b is required as a cofactor.

It is found in the endoplasmic reticulum membrane. The protein localises to the microsome membrane. The catalysed reaction is progesterone + reduced [NADPH--hemoprotein reductase] + O2 = 21-hydroxyprogesterone + oxidized [NADPH--hemoprotein reductase] + H2O + H(+). The enzyme catalyses 17alpha-hydroxyprogesterone + reduced [NADPH--hemoprotein reductase] + O2 = 11-deoxycortisol + oxidized [NADPH--hemoprotein reductase] + H2O + H(+). In terms of biological role, a cytochrome P450 monooxygenase that plays a major role in adrenal steroidogenesis. Catalyzes the hydroxylation at C-21 of progesterone and 17alpha-hydroxyprogesterone to respectively form 11-deoxycorticosterone and 11-deoxycortisol, intermediate metabolites in the biosynthetic pathway of mineralocorticoids and glucocorticoids. Mechanistically, uses molecular oxygen inserting one oxygen atom into a substrate, and reducing the second into a water molecule, with two electrons provided by NADPH via cytochrome P450 reductase (CPR; NADPH-ferrihemoprotein reductase). This chain is Steroid 21-hydroxylase (CYP21A2), found in Homo sapiens (Human).